Consider the following 250-residue polypeptide: 4-hydroxy-tetrahydrodipicolinate reductase (250 aa).

Residues 10 to 15, 78 to 80, and 105 to 108 each bind NAD(+); these read GVKGRI, GTT, and APNF. The Proton donor/acceptor role is filled by histidine 135. Histidine 136 is a (S)-2,3,4,5-tetrahydrodipicolinate binding site. Lysine 139 functions as the Proton donor in the catalytic mechanism. Residue 145–146 participates in (S)-2,3,4,5-tetrahydrodipicolinate binding; the sequence is GT.

The protein belongs to the DapB family.

The protein resides in the cytoplasm. The enzyme catalyses (S)-2,3,4,5-tetrahydrodipicolinate + NAD(+) + H2O = (2S,4S)-4-hydroxy-2,3,4,5-tetrahydrodipicolinate + NADH + H(+). It carries out the reaction (S)-2,3,4,5-tetrahydrodipicolinate + NADP(+) + H2O = (2S,4S)-4-hydroxy-2,3,4,5-tetrahydrodipicolinate + NADPH + H(+). Its pathway is amino-acid biosynthesis; L-lysine biosynthesis via DAP pathway; (S)-tetrahydrodipicolinate from L-aspartate: step 4/4. Catalyzes the conversion of 4-hydroxy-tetrahydrodipicolinate (HTPA) to tetrahydrodipicolinate. The chain is 4-hydroxy-tetrahydrodipicolinate reductase from Streptomyces avermitilis (strain ATCC 31267 / DSM 46492 / JCM 5070 / NBRC 14893 / NCIMB 12804 / NRRL 8165 / MA-4680).